Consider the following 895-residue polypeptide: Stonin-2 (895 aa).

Disordered stretches follow at residues 10–101, 144–204, and 236–279; these read THQS…AISN, ASES…METI, and NEVG…PKST. The segment covering 64 to 73 has biased composition (basic and acidic residues); sequence SHSEQDDSSE. Polar residues-rich tracts occupy residues 145 to 169 and 179 to 193; these read SESS…TDLQ and GRAS…SSSL. 3 positions are modified to phosphoserine: Ser278, Ser284, and Ser299. Disordered stretches follow at residues 291 to 326 and 386 to 424; these read ISSL…SPIN and QIDD…PRDG. 2 short sequence motifs (NPF) span residues 310–312 and 326–328; these read NPF. Positions 311–323 are enriched in polar residues; it reads PFLNESLQDIQPS. The 134-residue stretch at 424 to 557 folds into the SHD domain; sequence GWPMMLRIPE…DLPVQSMDLS (134 aa). In terms of domain architecture, MHD spans 565-872; that stretch reads EEEITVDIRD…AHYSYKVEIE (308 aa). Residue Ser759 is modified to Phosphoserine.

This sequence belongs to the Stoned B family. In terms of assembly, interacts with the second C2 domain of synaptotagmins SYT1 and SYT2. Interacts with EPS15, EPS15R and ITSN1. Interacts indirectly with the AP-2 adapter complex. Interacts with TOR1A and COPS4; the interaction controls STON2 protein stability. In terms of processing, phosphorylated in vitro by PKD. Post-translationally, neddylated and ubiquitinated; leading to its degradation and inhibited by TOR1A and COPS4.

It localises to the synapse. It is found in the synaptosome. The protein resides in the cytoplasm. The protein localises to the membrane. Its function is as follows. Adapter protein involved in endocytic machinery. Involved in the synaptic vesicle recycling. May facilitate clathrin-coated vesicle uncoating. The protein is Stonin-2 (Ston2) of Rattus norvegicus (Rat).